We begin with the raw amino-acid sequence, 172 residues long: Translocator protein 2 (172 aa).

5 helical membrane-spanning segments follow: residues 3–23 (PQGA…SLLT), 45–65 (VLLA…YLVW), 80–100 (LGLY…FFAA), 104–124 (GLAL…ALIW), and 130–150 (LAAV…SIAY).

The protein belongs to the TspO/BZRP family. As to quaternary structure, homotetramer. May also form homodimer. As to expression, expressed in erythrocytes (at protein level).

The protein localises to the endoplasmic reticulum membrane. The protein resides in the cell membrane. Functionally, cholesterol-binding protein involved in the redistribution of cholesterol from lipid droplets to the endoplasmic reticulum. Required to meet cholesterol demands during erythropoietic differentiation. May play a role in transport processes at the plasma membrane of erythrocytes, including regulating VDAC-mediated ATP export, and import of the heme precursors protoporphyrin IX and 5-aminolevulinic acid. This Canis lupus familiaris (Dog) protein is Translocator protein 2.